Reading from the N-terminus, the 348-residue chain is Alpha-2-HS-glycoprotein (348 aa).

A signal peptide spans 1-18 (MKTLVLLLCFTLLWGCQS). The Cystatin fetuin-A-type 1 domain occupies 19–133 (APQGTGLGFR…QFSVMHTKCH (115 aa)). 6 cysteine pairs are disulfide-bonded: Cys-32-Cys-339, Cys-89-Cys-100, Cys-114-Cys-132, Cys-146-Cys-149, Cys-208-Cys-219, and Cys-230-Cys-247. The N-linked (GlcNAc...) asparagine glycan is linked to Asn-99. 2 positions are modified to phosphoserine: Ser-134 and Ser-138. In terms of domain architecture, Cystatin fetuin-A-type 2 spans 144–255 (KVCPHCALLT…TCTAFPTQAN (112 aa)). Asn-156 and Asn-176 each carry an N-linked (GlcNAc...) asparagine glycan. Ser-307, Ser-311, Ser-314, and Ser-316 each carry phosphoserine.

The protein belongs to the fetuin family. Post-translationally, phosphorylated by FAM20C in the extracellular medium. In terms of tissue distribution, expressed by the liver and secreted in plasma.

It is found in the secreted. The chain is Alpha-2-HS-glycoprotein (AHSG) from Meriones unguiculatus (Mongolian jird).